A 237-amino-acid chain; its full sequence is Cuticlin-like protein 19 (237 aa).

A signal peptide spans 1–20; that stretch reads MVEYNRIFCVLVIFSTTIKC.

Interacts with vps-51 and vps-52. Expression detected in motor neurons.

The protein localises to the golgi apparatus. The protein resides in the trans-Golgi network. This is Cuticlin-like protein 19 (cutl-19) from Caenorhabditis elegans.